The following is a 138-amino-acid chain: Large ribosomal subunit protein uL16 (138 aa).

Positions 1 to 17 are enriched in basic residues; it reads MLIPRKVKHRKQHHPRQ. The tract at residues 1–22 is disordered; sequence MLIPRKVKHRKQHHPRQRGIAS.

It belongs to the universal ribosomal protein uL16 family. As to quaternary structure, part of the 50S ribosomal subunit.

In terms of biological role, binds 23S rRNA and is also seen to make contacts with the A and possibly P site tRNAs. The sequence is that of Large ribosomal subunit protein uL16 from Mycobacterium tuberculosis (strain ATCC 25177 / H37Ra).